Reading from the N-terminus, the 295-residue chain is Translational activator of cytochrome c oxidase 1 (295 aa).

Position 162 is an N6-acetyllysine (K162). Positions 190-225 (VEDREKKAVNLERALELAIEAGAEDVREAEDEEEEK) form a coiled coil.

Belongs to the TACO1 family.

It localises to the mitochondrion. Its function is as follows. Acts as a translational activator of mitochondrially-encoded cytochrome c oxidase 1. The polypeptide is Translational activator of cytochrome c oxidase 1 (Rattus norvegicus (Rat)).